Here is a 642-residue protein sequence, read N- to C-terminus: Tigger transposable element-derived protein 5 (642 aa).

Pro residues-rich tracts occupy residues 1–10 (MYPAGPPAGP) and 19–43 (LPGP…PGPR). The tract at residues 1 to 45 (MYPAGPPAGPVPRRGRRPLPGPPAPAPAPVPAARPPPPAPGPRPR) is disordered. The HTH psq-type domain occupies 47–98 (AVKMAFRKAYSIKDKLQAIERVKGGERQASVCRDFGVPGGTLRGWLKDEPKL). DNA-binding regions (H-T-H motif) lie at residues 74–94 (QASV…WLKD) and 145–178 (PLIQ…WQKR). In terms of domain architecture, HTH CENPB-type spans 112 to 185 (QRKKMRLANE…QKRHGISSQR (74 aa)). The disordered stretch occupies residues 185 to 233 (RFYGEAGPPAPSPAPGPPVKEEPALPSGAGPLPDRAPAPPPPAEGGYGD). 2 stretches are compositionally biased toward pro residues: residues 192–202 (PPAPSPAPGPP) and 218–227 (DRAPAPPPPA). DDE-1 domains follow at residues 233-357 (DEQI…VLLV) and 410-477 (RAHI…ERCW). The segment at 535–587 (LDDDGGPPEGCREEVGPALPPAAPPAPASLPSAMGGGEDEEEATDYGGTSVPT) is disordered. Positions 552–562 (ALPPAAPPAPA) are enriched in pro residues.

The protein belongs to the tigger transposable element derived protein family.

It is found in the nucleus. The chain is Tigger transposable element-derived protein 5 (TIGD5) from Homo sapiens (Human).